The chain runs to 352 residues: Protein RecA (352 aa).

67-74 contributes to the ATP binding site; that stretch reads GPESSGKT. The tract at residues 332–352 is disordered; that stretch reads VKPADAESKEDSPKLKAVDGF. Residues 335–352 are compositionally biased toward basic and acidic residues; that stretch reads ADAESKEDSPKLKAVDGF.

The protein belongs to the RecA family.

The protein localises to the cytoplasm. Can catalyze the hydrolysis of ATP in the presence of single-stranded DNA, the ATP-dependent uptake of single-stranded DNA by duplex DNA, and the ATP-dependent hybridization of homologous single-stranded DNAs. It interacts with LexA causing its activation and leading to its autocatalytic cleavage. The protein is Protein RecA of Pseudarthrobacter chlorophenolicus (strain ATCC 700700 / DSM 12829 / CIP 107037 / JCM 12360 / KCTC 9906 / NCIMB 13794 / A6) (Arthrobacter chlorophenolicus).